We begin with the raw amino-acid sequence, 68 residues long: Small ribosomal subunit protein bS21 (68 aa).

The disordered stretch occupies residues 35 to 68 (HYEKPSEKRARERAAAVRRARKMERKRMERDGIK). Residues 37 to 49 (EKPSEKRARERAA) show a composition bias toward basic and acidic residues. Residues 50–59 (AVRRARKMER) show a composition bias toward basic residues.

The protein belongs to the bacterial ribosomal protein bS21 family.

The polypeptide is Small ribosomal subunit protein bS21 (Sphingopyxis alaskensis (strain DSM 13593 / LMG 18877 / RB2256) (Sphingomonas alaskensis)).